The primary structure comprises 1024 residues: MKFLSLFIYRPVATSLLTLALVLSGLLGFRMLPVASLPQMDFPVIVVSASLPGASPETMASSVATPLERALGRIAGVSEMTSSSSLGSTEVVLMFDFDRDINGAARDVQGAINAAQSLLPSGMPRRPSYRKVNPSDAPIMIMTLSSDTFSPGQLYDYASTQLAQRLSQIDGVGDVTIGGSSLPAVRVDLNPQALFNQGVSLDAVRTTIANANVRRPQGAIDDRQQRWWLKTNDELHTAAEYRPLVIRYHQGAAVRLQDVATVTDSVENVRNAGMSNARPAVLVVIRKSPQANVIDTIDRIRDEVPQLRKTIPAAIQLEIAQDSSATIRASLHEVEQSLAVSVGLVVLVVFAFLRSGRATLIPAVAVPVSLIGTFAAMYLCGFSLNNLSLMALTVASGFVVDDAIVVLENISRHVEAGLKPLQAALLGGREVGFTVVSMSVSLIAVFIPLLMQGGIIGRFFREFAITLSVSIAISLVISLTLTPVMCARLLRSSAPRQQPRRRGFGRMLLVVQQGYGRALHRVLDHARWALLVFVASLGLTVYLFISMPKTFMPEQDTGRLMGFIQADQSTSFQAMRSKVEHFMRVVHADPAVESVVGFTGGWETNSGAMFIALKPLSTRGDNAQQVIARLRSKLAKEAGATLWLRAVQDIRIGARQSDGGYQYSLLSDSLDDLRQWQPKIRRAFASLPELVDVNSDQQDKGAEMALTYDRTRMARLGIDVADVNGLLNNAFGQRQISTIYQPLNQYQVVMGVDARYAQDINALNQMYVTNHQGQPIPLSSFASWQPANAPLSVEHEGLSAVSTLSFNLPEGVSLSQAAAAIDRSVIALGMPSSVRGSFSGTAAVFEQTQSSQLWLILAAIATVYIVLGMLYESYVHPLTILSTLPSAGMGALLALKLFNTPFSLIALIGILLLIGIVKKNAIMMVDFALQAQRQDGMPVREAIFQASLLRFRPIIMTTLAAMLGALPLVLSSGDGAELRQPLGITIVGGLVVSQLLTLFTTPVVYLYMDKLRRKPRWRPVPAQS.

Helical transmembrane passes span 3-23 (FLSL…ALVL), 333-353 (EVEQ…FAFL), 360-380 (LIPA…MYLC), 387-407 (LSLM…IVVL), 431-451 (VGFT…PLLM), 463-483 (FAIT…TLTP), 528-548 (WALL…ISMP), 853-873 (LWLI…LYES), 875-895 (VHPL…LLAL), 897-917 (LFNT…IGIV), 953-973 (PIIM…LSSG), and 984-1004 (ITIV…TPVV).

This sequence belongs to the resistance-nodulation-cell division (RND) (TC 2.A.6) family. MdtC subfamily. Part of a tripartite efflux system composed of MdtA, MdtB and MdtC. MdtC forms a heteromultimer with MdtB.

It is found in the cell inner membrane. This Erwinia amylovora (strain ATCC 49946 / CCPPB 0273 / Ea273 / 27-3) protein is Multidrug resistance protein MdtC.